We begin with the raw amino-acid sequence, 265 residues long: Mlc titration factor A (265 aa).

Zn(2+) contacts are provided by His-111, His-148, His-152, and Glu-211.

This sequence belongs to the MtfA family. Interacts with Mlc. Zn(2+) is required as a cofactor.

The protein resides in the cytoplasm. Its function is as follows. Involved in the modulation of the activity of the glucose-phosphotransferase system (glucose-PTS). Interacts with the transcriptional repressor Mlc, preventing its interaction with DNA and leading to the modulation of expression of genes regulated by Mlc, including ptsG, which encodes the PTS system glucose-specific EIICB component. In terms of biological role, shows zinc-dependent metallopeptidase activity. This Escherichia fergusonii (strain ATCC 35469 / DSM 13698 / CCUG 18766 / IAM 14443 / JCM 21226 / LMG 7866 / NBRC 102419 / NCTC 12128 / CDC 0568-73) protein is Mlc titration factor A.